Consider the following 176-residue polypeptide: NAD(P)H-quinone oxidoreductase subunit 6, chloroplastic (176 aa).

Helical transmembrane passes span 10–30 (FLLV…VLLT), 32–52 (PIFS…FYIL), 61–81 (AQLL…VMFM), 95–115 (VGNG…ITII), and 152–172 (FFLP…GAIA).

The protein belongs to the complex I subunit 6 family. As to quaternary structure, NDH is composed of at least 16 different subunits, 5 of which are encoded in the nucleus.

The protein resides in the plastid. The protein localises to the chloroplast thylakoid membrane. It catalyses the reaction a plastoquinone + NADH + (n+1) H(+)(in) = a plastoquinol + NAD(+) + n H(+)(out). The enzyme catalyses a plastoquinone + NADPH + (n+1) H(+)(in) = a plastoquinol + NADP(+) + n H(+)(out). Its function is as follows. NDH shuttles electrons from NAD(P)H:plastoquinone, via FMN and iron-sulfur (Fe-S) centers, to quinones in the photosynthetic chain and possibly in a chloroplast respiratory chain. The immediate electron acceptor for the enzyme in this species is believed to be plastoquinone. Couples the redox reaction to proton translocation, and thus conserves the redox energy in a proton gradient. The sequence is that of NAD(P)H-quinone oxidoreductase subunit 6, chloroplastic (ndhG) from Populus alba (White poplar).